A 410-amino-acid chain; its full sequence is Putative nickel insertion protein (410 aa).

This sequence belongs to the LarC family.

This is Putative nickel insertion protein from Cyanothece sp. (strain PCC 7425 / ATCC 29141).